The following is a 520-amino-acid chain: MSPTMFTIISILLSLICLVVGYFVRKTIAEAKISGARNMAEQIVEDAKRDAEALKKEALLEAKDEIHSFRVEAEQEVRERRNELQRQENRLLQKEENLDRKDESLDKRESLLEKRDHSLNERQQHIEEMESKVDDMIRLQKAELERISSLTRDEAKQIILDQVENELSHDIAVMTKESENRAKEEADKKAKNILSLALQRCAADHVAETTVSVVNLPNDEMKGRIIGREGRNIRTLETLTGIDLIIDDTPEAVILSGFDPIRRETARIALDKLVQDGRIHPARIEEMVEKSRREVDDYIREMGEQTTFEVGVHGLHPDLIKILGRLKFRTSYGQNVLKHSIEVAHLAGLMASELGEDAKLAKRAGLLHDIGKAIDHEVEGSHVEIGVELATKYKEHPVVINSIASHHGDQEPTSIIAVLVAAADALSAARPGARSETLENYIRRLEKLEDISESYEGVEKSFAIQAGREVRIMVKPDSINDLEAHRLARDIRKRIEDELDYPGHIKVTVIRETRAVEYAK.

The helical transmembrane segment at 4-24 (TMFTIISILLSLICLVVGYFV) threads the bilayer. In terms of domain architecture, KH spans 210-273 (TVSVVNLPND…ETARIALDKL (64 aa)). An HD domain is found at 336-429 (VLKHSIEVAH…VAAADALSAA (94 aa)).

The protein belongs to the RNase Y family.

It localises to the cell membrane. In terms of biological role, endoribonuclease that initiates mRNA decay. In Bacillus pumilus (strain SAFR-032), this protein is Ribonuclease Y.